Reading from the N-terminus, the 471-residue chain is Exoglucanase 2 (471 aa).

A signal peptide spans 1–18; the sequence is MIVGILTTLATLATLAAS. A propeptide spanning residues 19–24 is cleaved from the precursor; that stretch reads VPLEER. Glutamine 25 is modified (pyrrolidone carboxylic acid). The CBM1 domain maps to 26-62; that stretch reads ACSSVWGQCGGQNWSGPTCCASGSTCVYSNDYYSQCL. The segment covering 64-101 has biased composition (low complexity); the sequence is GAASSSSSTRAASTTSRVSPTTSRSSSATPPPGSTTTR. Residues 64 to 108 are disordered; that stretch reads GAASSSSSTRAASTTSRVSPTTSRSSSATPPPGSTTTRVPPVGSG. The segment at 66–106 is linker; the sequence is ASSSSSTRAASTTSRVSPTTSRSSSATPPPGSTTTRVPPVG. Residues 107–471 form a catalytic region; the sequence is SGTATYSGNP…LLTNANPSFL (365 aa). Residues threonine 111 and threonine 121 are each glycosylated (O-linked (Man...) threonine). O-linked (Man...) serine glycans are attached at residues serine 130, serine 133, serine 134, and serine 139. Threonine 146 carries O-linked (Man...) threonine glycosylation. An intrachain disulfide couples cysteine 200 to cysteine 259. Catalysis depends on aspartate 245, which acts as the Proton donor. Residue asparagine 313 is glycosylated (N-linked (GlcNAc) asparagine). Asparagine 334 carries N-linked (GlcNAc...) (high mannose) asparagine glycosylation. Cysteine 392 and cysteine 439 form a disulfide bridge.

The protein belongs to the glycosyl hydrolase 6 (cellulase B) family. Asn-334 contains mainly a high-mannose-type glycan (Hex(7-9)GlcNAc(2)) in a 3:1 ration with a single GlcNAc. Asn-313 was primarily unglycosylated with a small fraction (18%) bearing a single GlcNAc at this site.

Its subcellular location is the secreted. The catalysed reaction is Hydrolysis of (1-&gt;4)-beta-D-glucosidic linkages in cellulose and cellotetraose, releasing cellobiose from the non-reducing ends of the chains.. Its function is as follows. Exocellobiohydrolases (CBH) that catalyzes the hydrolysis of 1,4-beta-D-glucosidic bonds in cellulose to release the disaccharide cellobiose. The degradation of cellulose involves an interplay between different cellulolytic enzymes. Hydrolysis starts with endoglucanases (EGs), which cut internal beta-1,4-glucosidic bonds in cellulose to reduce the polymerization degree of the substrate and create new chain ends for exocellobiohydrolases (CBHs). The CBHs release the disaccharide cellobiose from the non-reducing end of the cellulose polymer chain. Finally, beta-1,4-glucosidases hydrolyze the cellobiose and other short cello-oligosaccharides into glucose units. In Hypocrea jecorina (Trichoderma reesei), this protein is Exoglucanase 2 (cbh2).